The sequence spans 99 residues: Acylphosphatase-2 (99 aa).

The residue at position 2 (serine 2) is an N-acetylserine. The region spanning 9-99 (SVDYEVFGRV…LEYSNFSIRY (91 aa)) is the Acylphosphatase-like domain. Residues arginine 24 and asparagine 42 contribute to the active site. Serine 93 carries the post-translational modification Phosphoserine.

This sequence belongs to the acylphosphatase family.

The catalysed reaction is an acyl phosphate + H2O = a carboxylate + phosphate + H(+). Functionally, its physiological role is not yet clear. The protein is Acylphosphatase-2 (ACYP2) of Cavia porcellus (Guinea pig).